The primary structure comprises 572 residues: DNA polymerase (572 aa).

The interval 1–222 (MSRKMFSCDF…LPMDKEIRKA (222 aa)) is 3'-5' exonuclease and strand displacement activities. Positions 56–66 (YFHNLKFDGAF) are interaction with the primer terminal protein. Mg(2+) contacts are provided by Asp-142 and Asp-166. Positions 223-226 (YRGG) are DNA-binding; Involved in the formation of a stable complex between TP and phi29 DNA polymerase. The segment at 227-572 (FTWLNDKYKE…VLVDSVFTIK (346 aa)) is initiation, polymerization and pyrophosphorolytic activities. Mg(2+) contacts are provided by Asp-246 and Val-247. Tyr-251, Lys-368, and Lys-380 together coordinate 5-methyl-UTP. Asp-453 and Asp-455 together coordinate Mg(2+). Position 455 (Asp-455) interacts with 5-methyl-UTP.

The protein belongs to the DNA polymerase type-B family. In terms of assembly, interacts with the primer terminal protein; this interaction allows the initiation of TP-primed DNA replication at both viral DNA ends. Interacts with DNA. It depends on Mg(2+) as a cofactor.

The catalysed reaction is DNA(n) + a 2'-deoxyribonucleoside 5'-triphosphate = DNA(n+1) + diphosphate. Its function is as follows. Polymerase responsible for protein-primed viral DNA replication by strand displacement with high processivity and fidelity. To start replication, the DNA polymerase forms a heterodimer with a free primer terminal protein (TP), recognizes the replication origins at both 5' ends of the linear chromosome, and initiates replication using as primer the OH-group of Ser-232 of the TP. This polymerase possesses three enzymatic activities: DNA synthesis (polymerase), primer terminal protein (TP) deoxynucleotidylation, which is the formation of a covalent linkage (phosphoester) between the hydroxyl group of a specific serine residue in TP and 5'-dAMP, a reaction directed by the second T at the 3' end, and 3' to 5' exonuclease activity. Exonuclease activity has a proofreading purpose. This chain is DNA polymerase (G), found in Bacillus phage M2 (Bacteriophage M2).